The sequence spans 701 residues: Larval serum protein 2 (701 aa).

Positions 1-21 (MKSFTVIALAAVALLATLGQA) are cleaved as a signal peptide. An N-linked (GlcNAc...) asparagine glycan is attached at Asn-204.

This sequence belongs to the hemocyanin family. As to quaternary structure, homohexamer.

The protein resides in the secreted. Its subcellular location is the extracellular space. In terms of biological role, larval storage protein (LSP) which may serve as a store of amino acids for synthesis of adult proteins. This is Larval serum protein 2 (Lsp2) from Drosophila melanogaster (Fruit fly).